Reading from the N-terminus, the 505-residue chain is Lysine--tRNA ligase (505 aa).

Mg(2+)-binding residues include E415 and E422.

Belongs to the class-II aminoacyl-tRNA synthetase family. In terms of assembly, homodimer. Mg(2+) serves as cofactor.

Its subcellular location is the cytoplasm. The catalysed reaction is tRNA(Lys) + L-lysine + ATP = L-lysyl-tRNA(Lys) + AMP + diphosphate. The chain is Lysine--tRNA ligase from Yersinia enterocolitica serotype O:8 / biotype 1B (strain NCTC 13174 / 8081).